The sequence spans 269 residues: Thiazole synthase (269 aa).

Catalysis depends on lysine 109, which acts as the Schiff-base intermediate with DXP. 1-deoxy-D-xylulose 5-phosphate-binding positions include glycine 170, 196 to 197, and 218 to 219; these read AG and NT.

Belongs to the ThiG family. In terms of assembly, homotetramer. Forms heterodimers with either ThiH or ThiS.

Its subcellular location is the plastid. The protein localises to the chloroplast. It catalyses the reaction [ThiS sulfur-carrier protein]-C-terminal-Gly-aminoethanethioate + 2-iminoacetate + 1-deoxy-D-xylulose 5-phosphate = [ThiS sulfur-carrier protein]-C-terminal Gly-Gly + 2-[(2R,5Z)-2-carboxy-4-methylthiazol-5(2H)-ylidene]ethyl phosphate + 2 H2O + H(+). The protein operates within cofactor biosynthesis; thiamine diphosphate biosynthesis. Its function is as follows. Catalyzes the rearrangement of 1-deoxy-D-xylulose 5-phosphate (DXP) to produce the thiazole phosphate moiety of thiamine. Sulfur is provided by the thiocarboxylate moiety of the carrier protein ThiS. In vitro, sulfur can be provided by H(2)S. The sequence is that of Thiazole synthase from Phaeodactylum tricornutum (strain CCAP 1055/1).